The primary structure comprises 820 residues: Inhibitor of nuclear factor kappa-B kinase epsilon subunit homolog 1 (820 aa).

Positions 21–299 (LFNDESIGKG…TDIFEFQPVT (279 aa)) constitute a Protein kinase domain. ATP-binding positions include 27–35 (IGKGAYSEV) and Lys-49. Residue Asp-149 is the Proton acceptor of the active site. Positions 758-798 (SPNKEQFPKPEQDSILESSIDEGSTSFESTPPSSPPDVGSN) are disordered.

The protein belongs to the protein kinase superfamily. Ser/Thr protein kinase family. In terms of assembly, interacts with allo-1 (via N-terminus); the interaction is direct. Expressed in oocytes.

The protein resides in the cytoplasm. The enzyme catalyses L-seryl-[protein] + ATP = O-phospho-L-seryl-[protein] + ADP + H(+). It catalyses the reaction L-threonyl-[protein] + ATP = O-phospho-L-threonyl-[protein] + ADP + H(+). Serine/threonine-protein kinase, which plays a role in regulating allophagy, an autophagic process in which paternal organelles, including mitochondria and membranous organelles, are degraded in embryos. Phosphorylates the allophagy receptor allo-1, which is required for allophagy. In Caenorhabditis elegans, this protein is Inhibitor of nuclear factor kappa-B kinase epsilon subunit homolog 1.